The primary structure comprises 214 residues: MSNGHVKFDADESQASASAVTDRQDDVLVISKKDKEVHSSSDEESDDDDAPQEEGLHSGKSEVESQITQREEAIRLEQSQLRSKRRKQNELYAKQKKSVNETEVTDEVIAELPEELLKNIDQKDEGSTQYSSSRHVTFDKLDESDENEEALAKAIKTKKRKTLKNLRKDSVKRGKFRVQLLSTTQDSKTLPPKKESSIIRSKDRWLNRKALNKG.

The span at methionine 1–alanine 10 shows a compositional bias: basic and acidic residues. A disordered region spans residues methionine 1–aspartate 106. Serine 16 is subject to Phosphoserine. Residues aspartate 22–serine 41 show a composition bias toward basic and acidic residues. Over residues aspartate 42–glutamine 52 the composition is skewed to acidic residues. A phosphoserine mark is found at serine 45, serine 65, and serine 144. Residues glutamate 54 to arginine 75 are compositionally biased toward basic and acidic residues. The interval serine 182–glycine 214 is disordered. Basic and acidic residues predominate over residues proline 192–leucine 206.

Belongs to the UTP16 family. As to quaternary structure, part of the small subunit (SSU) processome composed of at least 40 protein subunits and the RNA chaperone small nucleolar RNA (snoRNA) U3. Interacts with snoRNA U3. Interacts with MPP10.

It localises to the nucleus. Its subcellular location is the nucleolus. Functions as part of the small subunit (SSU) processome, first precursor of the small eukaryotic ribosomal subunit that coordinates the first two steps of ribosome biogenesis in transcription of the primary transcript pre-RNA and pre-18S processing. During the assembly of the SSU processome in the nucleolus, many ribosome biogenesis factors, an RNA chaperone and ribosomal proteins associate with the nascent pre-rRNA and work in concert to generate RNA folding, modifications, rearrangements and cleavage as well as targeted degradation of pre-ribosomal RNA by the RNA exosome. Has a role in bud site selection maybe via the regulation of expression of bipolar budding components. The chain is U3 small nucleolar RNA-associated protein 16 (BUD21) from Saccharomyces cerevisiae (strain ATCC 204508 / S288c) (Baker's yeast).